A 418-amino-acid polypeptide reads, in one-letter code: Intracellular coagulation inhibitor 1 (418 aa).

A signal peptide spans 1–24 (MKLGDWKFCLLLFQLMFLTNVCLS). N-linked (GlcNAc...) asparagine glycosylation is found at asparagine 49 and asparagine 404.

It belongs to the serpin family. In terms of assembly, monomer. Forms a covalent heterodimer with clotting factor C. Interacts with big defensin. In terms of processing, N-glycosylated. In terms of tissue distribution, expressed in hemocytes (at protein level).

It localises to the secreted. Functionally, serine protease inhibitor that specifically inhibits clotting factor C. Does not inhibit clotting factor B or proclotting enzyme. In Tachypleus tridentatus (Japanese horseshoe crab), this protein is Intracellular coagulation inhibitor 1.